A 102-amino-acid polypeptide reads, in one-letter code: NADH-quinone oxidoreductase subunit K 1 (102 aa).

3 consecutive transmembrane segments (helical) span residues 5–25 (FEHVLILAGILFALGLVCVLV), 30–50 (LIMLLIGIEVMLNAAMLAFVG), and 65–85 (LVIMALTSAEVSLALAMVVYL).

Belongs to the complex I subunit 4L family. As to quaternary structure, NDH-1 is composed of 14 different subunits. Subunits NuoA, H, J, K, L, M, N constitute the membrane sector of the complex.

It is found in the cell inner membrane. The enzyme catalyses a quinone + NADH + 5 H(+)(in) = a quinol + NAD(+) + 4 H(+)(out). Functionally, NDH-1 shuttles electrons from NADH, via FMN and iron-sulfur (Fe-S) centers, to quinones in the respiratory chain. The immediate electron acceptor for the enzyme in this species is believed to be ubiquinone. Couples the redox reaction to proton translocation (for every two electrons transferred, four hydrogen ions are translocated across the cytoplasmic membrane), and thus conserves the redox energy in a proton gradient. This Geobacter metallireducens (strain ATCC 53774 / DSM 7210 / GS-15) protein is NADH-quinone oxidoreductase subunit K 1.